A 1603-amino-acid chain; its full sequence is Gag-Pol polyprotein (1603 aa).

Positions 128-141 are enriched in basic and acidic residues; sequence VGETTVQRDAKMAP. The disordered stretch occupies residues 128–150; the sequence is VGETTVQRDAKMAPEETATPKTV. Residues 172 to 175 carry the PPXY motif motif; the sequence is PPPY. The LYPX(n)L motif signature appears at 180 to 184; it reads LYPSL. Positions 181-215 are disordered; that stretch reads YPSLAGVGEQQGQGGDTPRGAEQPRAEPGHAGLAP. The Nuclear export signal motif lies at 219-229; that stretch reads LTDWARIREEL. 2 consecutive CCHC-type zinc fingers follow at residues 507 to 524 and 533 to 550; these read RLCY…QCPK and ERCQ…QCRR. The disordered stretch occupies residues 544-571; that stretch reads NAKQCRRRDSNQGQRPGRGLSSGPWPVS. The 82-residue stretch at 609–690 folds into the Peptidase A2 domain; the sequence is ITALLDSGAD…VRGSILGRDC (82 aa). D614 serves as the catalytic For protease activity; shared with dimeric partner. The Reverse transcriptase domain maps to 750–938; that stretch reads LQLGHIEPSL…PGVQYLGYKL (189 aa). D815, D890, D891, D1158, E1192, D1213, and D1272 together coordinate Mg(2+). One can recognise an RNase H type-1 domain in the interval 1149-1280; that stretch reads PVPGPTVFTD…ADSQATFQAY (132 aa). The segment at 1280 to 1321 adopts an Integrase-type zinc-finger fold; sequence YPLREAKDLHTTLHIGPRALSKACNISMQQAREVVQTCPHCN. H1289, H1293, C1317, and C1320 together coordinate Zn(2+). The 164-residue stretch at 1333 to 1496 folds into the Integrase catalytic domain; that stretch reads RGLGPLQIWQ…TPVQKHWRPT (164 aa). D1344, D1401, and E1437 together coordinate Mg(2+). Positions 1502-1550 form a DNA-binding region, integrase-type; it reads PPVKIRIETGEWEKGWNVLVWGRGYAAVKNRDTDKVIWVPSRKVKPDIT. Positions 1548-1567 are involved in homooctamerization; that stretch reads DITQKDEVTKKDEASPLFAG. Residues 1549 to 1561 are compositionally biased toward basic and acidic residues; the sequence is ITQKDEVTKKDEA. The interval 1549–1603 is disordered; it reads ITQKDEVTKKDEASPLFAGSSDWIPWGDEQEGLQEEAASNKQEGPGEDTLAANES.

As to quaternary structure, active as a homodimer. Homodimer. Homomultimer. Homohexamer. In terms of assembly, homodimer; further associates as a homooctamer. As to quaternary structure, heterodimer of alpha and beta subunits. Three forms of RT exist: alpha-alpha (alpha-Pol), beta-beta (beta-Pol), and alpha-beta, with the major form being the heterodimer. Both the polymerase and RNase H active sites are located in the alpha subunit of heterodimeric RT alpha-beta. Requires Mg(2+) as cofactor. Mn(2+) serves as cofactor. Post-translationally, specific enzymatic cleavages in vivo yield mature proteins. In terms of processing, capsid protein p27: The cleavage at the C-terminus is slowly trimmed by the viral protease, sometimes being cut internally thereby generating the short version of the capsid protein and a capsid protein C-terminally extended by 3 amino acids in a ratio of 2:1.

Its subcellular location is the virion. The catalysed reaction is DNA(n) + a 2'-deoxyribonucleoside 5'-triphosphate = DNA(n+1) + diphosphate. It catalyses the reaction Endonucleolytic cleavage to 5'-phosphomonoester.. Capsid protein p27: Self-associates to form the irregular polyhedron core composed of hexamers and pentamers, that encapsulates the genomic RNA-nucleocapsid complex. Assembles as a tube in vitro. Binds to inositol hexakisphosphate (IP6), which allows the assembly of the polyhedral capsid. In terms of biological role, plays a role in the oligomerization of the Gag polyprotein and in the stabilization of the immature particle. Essential layering element during tube assembly. Allows the cooperative binging of Gag to the host plasma membrane. Functionally, binds strongly to viral nucleic acids and promotes their packaging. Plays a role in the maturation-stabilization of the viral dimeric RNA via highly structured zinc-binding motifs. Its function is as follows. The aspartyl protease mediates proteolytic cleavages of Gag and Gag-Pol polyproteins during or shortly after the release of the virion from the plasma membrane. Cleavages take place as an ordered, step-wise cascade to yield mature proteins. This process is called maturation. Displays maximal activity during the budding process just prior to particle release from the cell. Catalyzes viral DNA integration into the host chromosome, by performing a series of DNA cutting and joining reactions. This recombination event is an essential step in the viral replication cycle. Has a strong preference for using the 3'-OH at the viral DNA end as a nucleophile. This chain is Gag-Pol polyprotein (gag-pol), found in Rous sarcoma virus subgroup B (strain Schmidt-Ruppin) (RSV-SR-B).